Reading from the N-terminus, the 651-residue chain is Acetyl-coenzyme A synthetase (651 aa).

Residues 189–192 (RGGK), threonine 311, and asparagine 335 each bind CoA. ATP is bound by residues 387-389 (GEP), 411-416 (DTWWQT), aspartate 500, and arginine 515. CoA is bound at residue serine 523. Arginine 526 is a binding site for ATP. Mg(2+) contacts are provided by valine 537, histidine 539, and valine 542. Arginine 586 is a CoA binding site. N6-acetyllysine is present on lysine 611.

The protein belongs to the ATP-dependent AMP-binding enzyme family. Mg(2+) is required as a cofactor. Acetylated. Deacetylation by the SIR2-homolog deacetylase activates the enzyme.

The enzyme catalyses acetate + ATP + CoA = acetyl-CoA + AMP + diphosphate. Catalyzes the conversion of acetate into acetyl-CoA (AcCoA), an essential intermediate at the junction of anabolic and catabolic pathways. AcsA undergoes a two-step reaction. In the first half reaction, AcsA combines acetate with ATP to form acetyl-adenylate (AcAMP) intermediate. In the second half reaction, it can then transfer the acetyl group from AcAMP to the sulfhydryl group of CoA, forming the product AcCoA. This chain is Acetyl-coenzyme A synthetase, found in Brucella anthropi (strain ATCC 49188 / DSM 6882 / CCUG 24695 / JCM 21032 / LMG 3331 / NBRC 15819 / NCTC 12168 / Alc 37) (Ochrobactrum anthropi).